A 565-amino-acid polypeptide reads, in one-letter code: Periplasmic trehalase (565 aa).

Positions 1 to 30 (MKSPAPSRPQKMALIPACIFLCFAALSVQA) are cleaved as a signal peptide. Substrate is bound by residues Arg152, 159-160 (WD), Asn196, 205-207 (RSQ), 277-279 (RPE), and Gly310. Residues Asp312 and Glu496 each act as proton donor/acceptor in the active site. Glu511 contacts substrate. Residues 539-565 (CDNVPATRPLSESTTQPLKQKEAEPTP) form a disordered region.

This sequence belongs to the glycosyl hydrolase 37 family. Monomer.

It localises to the periplasm. It carries out the reaction alpha,alpha-trehalose + H2O = alpha-D-glucose + beta-D-glucose. Functionally, provides the cells with the ability to utilize trehalose at high osmolarity by splitting it into glucose molecules that can subsequently be taken up by the phosphotransferase-mediated uptake system. This Escherichia coli O45:K1 (strain S88 / ExPEC) protein is Periplasmic trehalase.